The primary structure comprises 910 residues: Leucine--tRNA ligase (910 aa).

Residues 42–52 (PYPSGKLHMGH) carry the 'HIGH' region motif. Residues 658–662 (TMSKS) carry the 'KMSKS' region motif. ATP is bound at residue Lys661.

The protein belongs to the class-I aminoacyl-tRNA synthetase family.

The protein resides in the cytoplasm. It catalyses the reaction tRNA(Leu) + L-leucine + ATP = L-leucyl-tRNA(Leu) + AMP + diphosphate. The polypeptide is Leucine--tRNA ligase (Acidovorax ebreus (strain TPSY) (Diaphorobacter sp. (strain TPSY))).